Reading from the N-terminus, the 97-residue chain is uncharacterized protein (97 aa).

The tract at residues 38 to 97 is disordered; sequence TSPPDWNKFSGKVSINEPTTSKSKSKSTSTSTSTSTSTSTSTSTSSSTSSTSSTTSSINK. Positions 56-97 are enriched in low complexity; it reads TTSKSKSKSTSTSTSTSTSTSTSTSTSSSTSSTSSTTSSINK.

This is an uncharacterized protein from Dictyostelium discoideum (Social amoeba).